A 71-amino-acid chain; its full sequence is uncharacterized protein (71 aa).

The N-terminal stretch at 1–23 (MTLLIILILKYLLCLENLKNISL) is a signal peptide. 4 N-linked (GlcNAc...) asparagine glycosylation sites follow: Asn20, Asn28, Asn44, and Asn50.

The protein resides in the secreted. This is an uncharacterized protein from Dictyostelium discoideum (Social amoeba).